The sequence spans 569 residues: MIASRYVASELESVTRKLELQLYERAAISEVLEQTSTDLELAKANEVLQTIKEEADACVAAINGGQKFYTIKYDQILSGLESLSGGQWSVGSPLEPLIRDGISDYLHILLYYALLSKNLAKLPQLLLDQEYYGHVSRCSWFMRLFYGLQIMPVKLIEFFRGHALQELPSKLRQTLRIHNFQLVGLPTQRAWQWTKLPIAMVDTDIIQKTASLDSQLDINVKKFGKLLREFPRQKSDRLEVLSDFLDLKPGSSEFAVVRAVQKWNVDSCAPQPNWIVRYWPTILIALAGGPAGIAAIWNARNDIAAFIKHNLFEFARDLVKNWLVEPLRNIWSTVHHDPTSSIAIMSQGTLDTEINSLQRMLIDFLKEHEYANTVDTSVLMKEIEQGNLTQFMEIYEAQLRKPIRNLVTGDLIRSLLIQIQKGKVDGSLAIHGIDKLLQSQQLVFGIVSISPALLILYVLCNSLTKLVKYGTVWSKGAKYRRSVSVSLNNVERLLNSPIEEFDGDKGNWNLGLLTLEMANLREYGAKLVPHSRTAEWCRDIDEMASSSALSTTGKLNVINRIYHVYGKYF.

The next 2 helical transmembrane spans lie at 279-299 (WPTI…IWNA) and 442-462 (LVFG…LCNS).

The protein resides in the mitochondrion membrane. Its function is as follows. Involved in the mitochondrial expression of subunits 6 and 8 of the F0-F1 ATP synthase. In Eremothecium gossypii (strain ATCC 10895 / CBS 109.51 / FGSC 9923 / NRRL Y-1056) (Yeast), this protein is Nuclear control of ATPase protein 2 (NCA2).